A 344-amino-acid polypeptide reads, in one-letter code: Uroporphyrinogen decarboxylase (344 aa).

Substrate is bound by residues 26 to 30 (RQAGR), Asp-76, Tyr-151, Ser-206, and His-321.

This sequence belongs to the uroporphyrinogen decarboxylase family. Homodimer.

The protein localises to the cytoplasm. The catalysed reaction is uroporphyrinogen III + 4 H(+) = coproporphyrinogen III + 4 CO2. Its pathway is porphyrin-containing compound metabolism; protoporphyrin-IX biosynthesis; coproporphyrinogen-III from 5-aminolevulinate: step 4/4. Its function is as follows. Catalyzes the decarboxylation of four acetate groups of uroporphyrinogen-III to yield coproporphyrinogen-III. In Sinorhizobium fredii (strain NBRC 101917 / NGR234), this protein is Uroporphyrinogen decarboxylase.